Consider the following 143-residue polypeptide: Putative pre-16S rRNA nuclease (143 aa).

Belongs to the YqgF nuclease family.

It is found in the cytoplasm. Functionally, could be a nuclease involved in processing of the 5'-end of pre-16S rRNA. This is Putative pre-16S rRNA nuclease from Ralstonia pickettii (strain 12J).